The primary structure comprises 105 residues: Vitelline membrane protein Vm32E (105 aa).

A signal peptide spans 1-17; that stretch reads MHFIALIVAVCVAFAGA. One can recognise a VM domain in the interval 25–62; that stretch reads GIAAPPCPKNYLFSCQPNLVPAPCAQEAASYGSAGAYA.

Belongs to the vitelline membrane family.

The protein localises to the secreted. Major early eggshell protein. This Drosophila ananassae (Fruit fly) protein is Vitelline membrane protein Vm32E.